A 704-amino-acid polypeptide reads, in one-letter code: Protein arginine N-methyltransferase 7 (704 aa).

SAM-dependent MTase PRMT-type domains lie at E14 to W356 and S366 to E704.

The protein belongs to the class I-like SAM-binding methyltransferase superfamily. Protein arginine N-methyltransferase family. PRMT7 subfamily.

Functionally, essential arginine methyltransferase that can both catalyze the formation of omega-N monomethylarginine (MMA) and symmetrical dimethylarginine (sDMA). Specifically mediates the symmetrical dimethylation of arginine residues in the small nuclear ribonucleoproteins SmD1 and SmD3. This chain is Protein arginine N-methyltransferase 7 (Art7), found in Drosophila grimshawi (Hawaiian fruit fly).